The primary structure comprises 198 residues: Recombination protein RecR (198 aa).

The C4-type zinc-finger motif lies at 57 to 72 (CEKCNTFTEAQICEVC). Residues 80–175 (TLLCVVETPA…AVTRLARGVP (96 aa)) form the Toprim domain.

It belongs to the RecR family.

In terms of biological role, may play a role in DNA repair. It seems to be involved in an RecBC-independent recombinational process of DNA repair. It may act with RecF and RecO. In Burkholderia ambifaria (strain MC40-6), this protein is Recombination protein RecR.